A 491-amino-acid polypeptide reads, in one-letter code: Tryptophan 5-hydroxylase 2 (491 aa).

Serine 19 is subject to Phosphoserine. Residues 33 to 63 are disordered; sequence NLTVNKSNSGKNDDKKGNKGSSRSETAPDSG. In terms of domain architecture, ACT spans 66–141; sequence AVVFSLRNEV…TIVTLNPPEN (76 aa). Positions 319, 324, and 364 each coordinate Fe cation.

The protein belongs to the biopterin-dependent aromatic amino acid hydroxylase family. Interacts with DNAJC12. Fe(2+) serves as cofactor.

The enzyme catalyses (6R)-L-erythro-5,6,7,8-tetrahydrobiopterin + L-tryptophan + O2 = 5-hydroxy-L-tryptophan + (4aS,6R)-4a-hydroxy-L-erythro-5,6,7,8-tetrahydrobiopterin. Its pathway is aromatic compound metabolism; serotonin biosynthesis; serotonin from L-tryptophan: step 1/2. This chain is Tryptophan 5-hydroxylase 2 (TPH2), found in Equus caballus (Horse).